The following is a 692-amino-acid chain: Elongation factor G (692 aa).

The tr-type G domain maps to 8-282 (ENTRNIGIMA…AVLDYLPSPL (275 aa)). GTP-binding positions include 17-24 (AHIDAGKT), 81-85 (DTPGH), and 135-138 (NKMD).

Belongs to the TRAFAC class translation factor GTPase superfamily. Classic translation factor GTPase family. EF-G/EF-2 subfamily.

It localises to the cytoplasm. In terms of biological role, catalyzes the GTP-dependent ribosomal translocation step during translation elongation. During this step, the ribosome changes from the pre-translocational (PRE) to the post-translocational (POST) state as the newly formed A-site-bound peptidyl-tRNA and P-site-bound deacylated tRNA move to the P and E sites, respectively. Catalyzes the coordinated movement of the two tRNA molecules, the mRNA and conformational changes in the ribosome. This chain is Elongation factor G (fusA), found in Halalkalibacterium halodurans (strain ATCC BAA-125 / DSM 18197 / FERM 7344 / JCM 9153 / C-125) (Bacillus halodurans).